A 263-amino-acid chain; its full sequence is Phosphatidylglycerol--prolipoprotein diacylglyceryl transferase (263 aa).

Transmembrane regions (helical) follow at residues 17–37 (LSVR…IFLG), 56–76 (LLFY…VLFY), and 88–108 (IFAV…VLVA). R139 is a binding site for a 1,2-diacyl-sn-glycero-3-phospho-(1'-sn-glycerol). 2 helical membrane-spanning segments follow: residues 176-196 (QLYH…WFTA) and 236-256 (ISMG…MVVF).

The protein belongs to the Lgt family.

The protein resides in the cell inner membrane. The catalysed reaction is L-cysteinyl-[prolipoprotein] + a 1,2-diacyl-sn-glycero-3-phospho-(1'-sn-glycerol) = an S-1,2-diacyl-sn-glyceryl-L-cysteinyl-[prolipoprotein] + sn-glycerol 1-phosphate + H(+). Its pathway is protein modification; lipoprotein biosynthesis (diacylglyceryl transfer). Its function is as follows. Catalyzes the transfer of the diacylglyceryl group from phosphatidylglycerol to the sulfhydryl group of the N-terminal cysteine of a prolipoprotein, the first step in the formation of mature lipoproteins. The polypeptide is Phosphatidylglycerol--prolipoprotein diacylglyceryl transferase (Dechloromonas aromatica (strain RCB)).